Consider the following 1483-residue polypeptide: Neuropathy target esterase sws (1483 aa).

Residues 1-34 (MDVLELLRASANGCYNTLFSDAWFQYVSKQIATT) are Lumenal-facing. Residues 35–55 (MYWYGALLVIGVLFIAWFLYF) form a helical membrane-spanning segment. The Cytoplasmic portion of the chain corresponds to 56-1483 (KRLARLRLRD…ENLTKTDTKN (1428 aa)). 174–301 (IFGHFEKPIF…IRVIQVIMIR (128 aa)) contributes to the a nucleoside 3',5'-cyclic phosphate binding site. Disordered regions lie at residues 348–380 (ASRPVVRAPTSPNSRLSREEHTLSDPDPNPNAN) and 404–440 (SSAVSVNQAGTRRSSTTYGPSGESPNGNANTAPGTSI). Over residues 413-440 (GTRRSSTTYGPSGESPNGNANTAPGTSI) the composition is skewed to polar residues. 2 positions are modified to phosphoserine: Ser418 and Ser424. Residues 456-585 (ELGL…VVRR) and 574-701 (IVLD…LSHR) each bind a nucleoside 3',5'-cyclic phosphate. Residues 927–1093 (LVLGGGGARG…VNNLPGHLWR (167 aa)) form the PNPLA domain. The GXGXXG motif lies at 931 to 936 (GGGARG). The GXSXG motif lies at 958-962 (GVSIG). The active-site Nucleophile is Ser960. The active-site Proton acceptor is the Asp1080. The DGA/G signature appears at 1080 to 1082 (DGG). Ser1174 carries the phosphoserine modification. Residues 1349–1483 (DKATQSTPPT…ENLTKTDTKN (135 aa)) form a disordered region. The segment covering 1351–1373 (ATQSTPPTPNKQHALSPTSSQTN) has biased composition (polar residues). Residues 1382–1396 (KPKEKQPSYDKLDRE) show a composition bias toward basic and acidic residues. Low complexity predominate over residues 1410 to 1419 (ERSSMQQRDS). Basic and acidic residues predominate over residues 1445 to 1458 (LNKPEQQPEQKPVP). A compositionally biased stretch (low complexity) spans 1465–1474 (QKQQDQQQQE).

The protein belongs to the NTE family. As to quaternary structure, interacts with Pka-C3; interaction inhibits the catalytic function of Pka-C3 and the esterase activity of sws.

The protein localises to the endoplasmic reticulum membrane. It carries out the reaction a 1-acyl-sn-glycero-3-phosphocholine + H2O = sn-glycerol 3-phosphocholine + a fatty acid + H(+). Phospholipase B that deacylates intracellular phosphatidylcholine (PtdCho), generating glycerophosphocholine (GroPtdCho). This deacylation occurs at both sn-2 and sn-1 positions of PtdCho. Its specific chemical modification by certain organophosphorus (OP) compounds leads to distal axonopathy. Plays a role in the signaling mechanism between neurons and glia that regulates glia wrapping during development of the adult brain. Essential for membrane lipid homeostasis and cell survival in both neurons and glia of the adult brain. This Drosophila virilis (Fruit fly) protein is Neuropathy target esterase sws.